The following is an 827-amino-acid chain: NT-3 growth factor receptor (827 aa).

A signal peptide spans 1 to 31; that stretch reads MDVSLCPTKCTFWRVFLLWSIWGDYLLSVLA. Intrachain disulfides connect Cys32/Cys38 and Cys36/Cys45. At 32 to 430 the chain is on the extracellular side; sequence CPANCLCSKT…ITVTHKPEED (399 aa). N-linked (GlcNAc...) asparagine glycosylation is found at Asn68, Asn72, and Asn79. LRR repeat units lie at residues 104 to 125 and 128 to 149; these read GLQR…AFAK and HLRY…LFQT. The LRRCT domain occupies 160–209; sequence NPFNCSCDIRWIQLWQEKGEANLQSQQLHCMNLDTAVILLRNMNITQCDL. Asn163 carries N-linked (GlcNAc...) asparagine glycosylation. 2 cysteine pairs are disulfide-bonded: Cys164–Cys189 and Cys166–Cys207. Asn203, Asn218, Asn232, Asn259, Asn267, Asn272, and Asn294 each carry an N-linked (GlcNAc...) asparagine glycan. Ig-like C2-type domains follow at residues 210–300 and 319–382; these read PEIS…VLLT and HCIA…VATN. Cys231 and Cys284 form a disulfide bridge. A disulfide bond links Cys320 and Cys362. Asn375 and Asn388 each carry an N-linked (GlcNAc...) asparagine glycan. The helical transmembrane segment at 431–455 threads the bilayer; that stretch reads TFGVSIAVGLAAFACVLLVVLFIMI. Topologically, residues 456-827 are cytoplasmic; sequence NKYGRRSKFG…ATPIYLDILG (372 aa). At Tyr518 the chain carries Phosphotyrosine; by autocatalysis. In terms of domain architecture, Protein kinase spans 540-812; sequence IVLKRELGEG…LNIKEIYKIL (273 aa). ATP is bound by residues 546 to 554 and Lys574; that span reads LGEGAFGKV. The active-site Proton acceptor is Asp681. Phosphotyrosine; by autocatalysis occurs at positions 707, 711, 712, and 822.

It belongs to the protein kinase superfamily. Tyr protein kinase family. Insulin receptor subfamily. In terms of assembly, exists in a dynamic equilibrium between monomeric (low affinity) and dimeric (high affinity) structures. Interacts with PTPRS. Ligand-mediated auto-phosphorylation.

The protein resides in the membrane. It carries out the reaction L-tyrosyl-[protein] + ATP = O-phospho-L-tyrosyl-[protein] + ADP + H(+). In terms of biological role, receptor tyrosine kinase involved in nervous system and probably heart development. Upon binding of its ligand NTF3/neurotrophin-3, NTRK3 autophosphorylates and activates different signaling pathways, including the phosphatidylinositol 3-kinase/AKT and the MAPK pathways, that control cell survival and differentiation. The KT and KD isoforms fail to stimulate transformation, process outgrowth or survival. Isoform KI25 exhibits tyrosine phosphorylation in the absence of ligand and is unable to mediate survival of neuronal cells. This is NT-3 growth factor receptor (NTRK3) from Gallus gallus (Chicken).